We begin with the raw amino-acid sequence, 300 residues long: 4-hydroxy-tetrahydrodipicolinate synthase (300 aa).

Threonine 49 is a binding site for pyruvate. The active-site Proton donor/acceptor is tyrosine 137. Residue lysine 166 is the Schiff-base intermediate with substrate of the active site. Isoleucine 208 contributes to the pyruvate binding site.

Belongs to the DapA family. Homotetramer; dimer of dimers.

It localises to the cytoplasm. The enzyme catalyses L-aspartate 4-semialdehyde + pyruvate = (2S,4S)-4-hydroxy-2,3,4,5-tetrahydrodipicolinate + H2O + H(+). It participates in amino-acid biosynthesis; L-lysine biosynthesis via DAP pathway; (S)-tetrahydrodipicolinate from L-aspartate: step 3/4. Catalyzes the condensation of (S)-aspartate-beta-semialdehyde [(S)-ASA] and pyruvate to 4-hydroxy-tetrahydrodipicolinate (HTPA). This is 4-hydroxy-tetrahydrodipicolinate synthase from Methanopyrus kandleri (strain AV19 / DSM 6324 / JCM 9639 / NBRC 100938).